A 399-amino-acid polypeptide reads, in one-letter code: Glutathione-independent formaldehyde dehydrogenase (399 aa).

Cys-47 lines the Zn(2+) pocket. NAD(+) is bound by residues Gly-48, Ser-49, and His-52. Residues His-68, Cys-98, Cys-101, Cys-104, Cys-112, and Asp-170 each contribute to the Zn(2+) site. NAD(+) is bound by residues Val-198, Asp-218, Arg-223, Val-263, Arg-268, Pro-300, Gln-338, and Thr-339.

The protein belongs to the zinc-containing alcohol dehydrogenase family. Homotetramer. Zn(2+) serves as cofactor.

It carries out the reaction formaldehyde + NAD(+) + H2O = formate + NADH + 2 H(+). The enzyme catalyses acetaldehyde + NAD(+) + H2O = acetate + NADH + 2 H(+). In terms of biological role, dehydrogenase that catalyzes the NAD(+)-dependent oxidation of formaldehyde and acetaldehyde. Shows no detectable activity against either aldehydes with longer carbon chains or ethanol. In Pseudomonas aeruginosa (strain LESB58), this protein is Glutathione-independent formaldehyde dehydrogenase.